The following is a 1198-amino-acid chain: DNA polymerase II large subunit (1198 aa).

2 disordered regions span residues Y281 to K332 and H534 to S553. A compositionally biased stretch (acidic residues) spans D286–D319.

It belongs to the archaeal DNA polymerase II family. Heterodimer of a large subunit and a small subunit.

The catalysed reaction is DNA(n) + a 2'-deoxyribonucleoside 5'-triphosphate = DNA(n+1) + diphosphate. It catalyses the reaction Exonucleolytic cleavage in the 3'- to 5'-direction to yield nucleoside 5'-phosphates.. In terms of biological role, possesses two activities: a DNA synthesis (polymerase) and an exonucleolytic activity that degrades single-stranded DNA in the 3'- to 5'-direction. Has a template-primer preference which is characteristic of a replicative DNA polymerase. The protein is DNA polymerase II large subunit of Natronomonas pharaonis (strain ATCC 35678 / DSM 2160 / CIP 103997 / JCM 8858 / NBRC 14720 / NCIMB 2260 / Gabara) (Halobacterium pharaonis).